Here is a 309-residue protein sequence, read N- to C-terminus: uncharacterized protein (309 aa).

The RPE1 insert domain occupies 9–55; the sequence is NFLYNIANKDGFKGYKECRTSAYKNVFDDSSTKSTSKFHLGISDTKN. A helical membrane pass occupies residues 62–82; it reads IIGLILIIFAGVLFYAYILQH.

This sequence belongs to the LicD transferase family.

Its subcellular location is the membrane. This is an uncharacterized protein from Rickettsia typhi (strain ATCC VR-144 / Wilmington).